The following is a 473-amino-acid chain: Photosystem II CP43 reaction center protein (473 aa).

The propeptide occupies 1 to 14; sequence MKILYSLRRFYHVE. T15 is modified (N-acetylthreonine). At T15 the chain carries Phosphothreonine. Helical transmembrane passes span 69 to 93, 134 to 155, 178 to 200, 255 to 275, and 291 to 312; these read LFEV…PHLA, LLGP…KDRN, KALY…RKIT, KPFA…LSYS, and WFNN…ASQA. [CaMn4O5] cluster is bound at residue E367. A helical transmembrane segment spans residues 447-471; it reads RARAAAAGFEKGIDRDLEPVLYMTP.

It belongs to the PsbB/PsbC family. PsbC subfamily. As to quaternary structure, PSII is composed of 1 copy each of membrane proteins PsbA, PsbB, PsbC, PsbD, PsbE, PsbF, PsbH, PsbI, PsbJ, PsbK, PsbL, PsbM, PsbT, PsbX, PsbY, PsbZ, Psb30/Ycf12, at least 3 peripheral proteins of the oxygen-evolving complex and a large number of cofactors. It forms dimeric complexes. It depends on Binds multiple chlorophylls and provides some of the ligands for the Ca-4Mn-5O cluster of the oxygen-evolving complex. It may also provide a ligand for a Cl- that is required for oxygen evolution. PSII binds additional chlorophylls, carotenoids and specific lipids. as a cofactor.

The protein resides in the plastid. It is found in the chloroplast thylakoid membrane. In terms of biological role, one of the components of the core complex of photosystem II (PSII). It binds chlorophyll and helps catalyze the primary light-induced photochemical processes of PSII. PSII is a light-driven water:plastoquinone oxidoreductase, using light energy to abstract electrons from H(2)O, generating O(2) and a proton gradient subsequently used for ATP formation. The chain is Photosystem II CP43 reaction center protein from Sorghum bicolor (Sorghum).